Reading from the N-terminus, the 381-residue chain is Arf-GAP with dual PH domain-containing protein 2 (381 aa).

The 123-residue stretch at 9–131 (KRLLELLRAP…FMADGETISL (123 aa)) folds into the Arf-GAP domain. The segment at 25–48 (CADCGAADPDWASYKLGIFICLNC) adopts a C4-type zinc-finger fold. 2 PH domains span residues 132-233 (PGNR…AARL) and 255-361 (NYLK…GVLS).

As to expression, highly expressed in placenta, spleen, kidney, skeletal muscle and adrenal gland. Weakly expressed in thyroid, liver, heart, lung, small intestine, peripheral blood leukocytes. Not detected in spinal cord, brain, stomach, trachea, colon, lymph node and bone marrow.

Its subcellular location is the cytoplasm. It localises to the cell membrane. GTPase-activating protein for the ADP ribosylation factor family (Potential). Binds phosphatidylinositol 3,4,5-trisphosphate (PtdInsP3) and inositol 1,3,4,5-tetrakisphosphate (InsP4). Possesses a stoichiometry of two binding sites for InsP4 with identical affinity. The sequence is that of Arf-GAP with dual PH domain-containing protein 2 (ADAP2) from Homo sapiens (Human).